Consider the following 160-residue polypeptide: MTKKKAHKPGSATIALNKRARHEYFIEEEFEAGLALQGWEVKSLRAGKANISDSYVLLRDGEAFLFGANITPMAVASTHVVCDPTRTRKLLLNQRELDSLYGRVNREGYTVVALSLYWKNAWCKVKIGVAKGKKQHDKRSDIKEREWQVDKARIMKNSHR.

Belongs to the SmpB family.

The protein resides in the cytoplasm. Its function is as follows. Required for rescue of stalled ribosomes mediated by trans-translation. Binds to transfer-messenger RNA (tmRNA), required for stable association of tmRNA with ribosomes. tmRNA and SmpB together mimic tRNA shape, replacing the anticodon stem-loop with SmpB. tmRNA is encoded by the ssrA gene; the 2 termini fold to resemble tRNA(Ala) and it encodes a 'tag peptide', a short internal open reading frame. During trans-translation Ala-aminoacylated tmRNA acts like a tRNA, entering the A-site of stalled ribosomes, displacing the stalled mRNA. The ribosome then switches to translate the ORF on the tmRNA; the nascent peptide is terminated with the 'tag peptide' encoded by the tmRNA and targeted for degradation. The ribosome is freed to recommence translation, which seems to be the essential function of trans-translation. The polypeptide is SsrA-binding protein (Escherichia coli O6:K15:H31 (strain 536 / UPEC)).